Consider the following 152-residue polypeptide: Mitochondrial holo-[acyl-carrier-protein] synthase (152 aa).

Belongs to the P-Pant transferase superfamily. AcpS family.

Its subcellular location is the mitochondrion. It catalyses the reaction apo-[ACP] + CoA = holo-[ACP] + adenosine 3',5'-bisphosphate + H(+). Functionally, transfers the 4'-phosphopantetheine moiety from coenzyme A to a Ser of mitochondrial acyl-carrier-protein. The chain is Mitochondrial holo-[acyl-carrier-protein] synthase (PPT2) from Candida glabrata (strain ATCC 2001 / BCRC 20586 / JCM 3761 / NBRC 0622 / NRRL Y-65 / CBS 138) (Yeast).